A 230-amino-acid polypeptide reads, in one-letter code: uncharacterized protein (230 aa).

Belongs to the transferase hexapeptide repeat family.

This is an uncharacterized protein from Escherichia coli (strain K12).